The chain runs to 1132 residues: Cytospin-A (1132 aa).

Residues 1–166 are disordered; sequence MKKAGRPVGN…SKSDGQLSDK (166 aa). Low complexity-rich tracts occupy residues 73–109 and 119–129; these read STHS…SKES and SRNSSSKKQSS. Residues 150 to 159 show a composition bias toward basic and acidic residues; sequence SESRMSKSKS. Positions 226–268 form a coiled coil; sequence DVESTLLLLQEQNQAIRGELNLLKNENRMLKDRLNALGFSLEQ. Residues 301–381 form a disordered region; the sequence is ASSVEGSAPG…RKGSSGNTSE (81 aa). Positions 333–343 are enriched in polar residues; sequence SEVYQAVTSSD. Over residues 348–377 the composition is skewed to low complexity; sequence APSGCGSSSSSESEGGPPACRSSSRKGSSG. 2 coiled-coil regions span residues 385–440 and 478–798; these read ACLT…MDSL and RYME…RGRV. Disordered stretches follow at residues 869–895 and 939–1016; these read TSTT…AAAV and SRPA…RKDP. Residues 875-889 show a composition bias toward pro residues; it reads APLPRTPLSPSPMKT. A compositionally biased stretch (polar residues) spans 946–961; that stretch reads QRVSNMDTSKTITVSR. Residues 962–972 show a composition bias toward basic and acidic residues; the sequence is RSSEEPKRDIS. The segment covering 979–1000 has biased composition (low complexity); sequence ASSLISMSSAAALSSSSSPTAS. Positions 1026 to 1131 constitute a Calponin-homology (CH) domain; sequence GSKRNALLRW…YVTSIYKYFE (106 aa).

It belongs to the cytospin-A family. As to quaternary structure, may interact with both microtubules and actin cytoskeleton.

The protein localises to the cytoplasm. The protein resides in the cytoskeleton. It localises to the spindle. It is found in the cell junction. Its subcellular location is the gap junction. In terms of biological role, involved in cytokinesis and spindle organization. May play a role in actin cytoskeleton organization and microtubule stabilization and hence required for proper cell adhesion and migration. The sequence is that of Cytospin-A (specc1la) from Danio rerio (Zebrafish).